A 622-amino-acid polypeptide reads, in one-letter code: C6 finger transcription factor fumR (622 aa).

A DNA-binding region (zn(2)-C6 fungal-type) is located at residues 94–123; it reads CDRCHGQKLRCRRENNSDTCVRCARAGVRC. Disordered stretches follow at residues 127–175, 206–248, 299–360, and 556–585; these read PMRL…HSDH, ALTA…APNL, FDQA…SNSI, and PATG…DAGD. 3 stretches are compositionally biased toward polar residues: residues 148–167, 217–226, and 347–360; these read PANG…GPND, VHTSQPSGPQ, and RGNS…SNSI. Positions 556–571 are enriched in low complexity; the sequence is PATGSASKTAASGPPA.

It is found in the nucleus. Functionally, transcription factor that regulates the expression of the gene clusters that mediate the biosynthesis of pseurotin and fumagillin. This Aspergillus fumigatus (strain ATCC MYA-4609 / CBS 101355 / FGSC A1100 / Af293) (Neosartorya fumigata) protein is C6 finger transcription factor fumR.